Reading from the N-terminus, the 109-residue chain is Guanylin (109 aa).

The N-terminal stretch at 1 to 21 is a signal peptide; sequence MNTFLFPTLCLLGVWAALAGG. Residues 22-94 constitute a propeptide that is removed on maturation; that stretch reads VTVKDGEFSF…LERLETIAQD (73 aa). 3 cysteine pairs are disulfide-bonded: cysteine 63/cysteine 76, cysteine 98/cysteine 106, and cysteine 101/cysteine 109.

The protein belongs to the guanylin family.

It is found in the secreted. Endogenous activator of intestinal guanylate cyclase. It stimulates this enzyme through the same receptor binding region as the heat-stable enterotoxins. This is Guanylin (GUCA2A) from Sus scrofa (Pig).